Here is a 107-residue protein sequence, read N- to C-terminus: UPF0102 protein CTN_0433 (107 aa).

The protein belongs to the UPF0102 family.

In Thermotoga neapolitana (strain ATCC 49049 / DSM 4359 / NBRC 107923 / NS-E), this protein is UPF0102 protein CTN_0433.